Reading from the N-terminus, the 445-residue chain is MAERKYFGTDGVRGLVGQAPITPDFVMKLGWAAGQVLAKQGTKKVIIGKDTRISGYMLESALEAGLAAAGLQAKFTGPMPTPAVAYLTQTFRAEAGIVISASHNPYYDNGIKFFSSEGTKLPDDVEMAIEAELDKPMTCVESALLGKASRLNDAAGRYIEFCKSTFPKELSLAGLKIVIDCANGATYHIAPNVFKELGAEIITIGCEPNGTNINHEVGATDVRALQAKVVEEKADFGVAFDGDGDRIIMVDEFGEKVDGDQIAYIIARDALRRGELKGGVVGTLMTNMGMEVALRNLGIPFVRSDVGDRYVMEKLLENNWLIGAENSGHVILLDKVTTGDAIVAALQVIASIVGSKMSLKELCDGMSMFPQILVNVRFAGDNDPLESEAVKAAQADVEAKLGDNGRVLLRKSGTEPLIRVMVEGEDAELVTQYAQQIADAVKESC.

Ser102 (phosphoserine intermediate) is an active-site residue. Mg(2+) contacts are provided by Ser102, Asp241, Asp243, and Asp245. A Phosphoserine modification is found at Ser102.

Belongs to the phosphohexose mutase family. The cofactor is Mg(2+). Post-translationally, activated by phosphorylation.

The enzyme catalyses alpha-D-glucosamine 1-phosphate = D-glucosamine 6-phosphate. In terms of biological role, catalyzes the conversion of glucosamine-6-phosphate to glucosamine-1-phosphate. This is Phosphoglucosamine mutase from Aliivibrio fischeri (strain MJ11) (Vibrio fischeri).